Consider the following 252-residue polypeptide: ELH type 2 (252 aa).

The signal sequence occupies residues 1–19; the sequence is AISLLMCLILSALCASSES. Propeptides lie at residues 20 to 75, 92 to 130, and 144 to 185; these read AVVH…VNNE, PQEVSGLKPVMMSRASASADENSLFDLYNTDGAMYQREL, and AAGD…SGIA. Residues 145–161 are compositionally biased toward basic and acidic residues; sequence AGDEDKAEEHNPETESH. Positions 145–171 are disordered; it reads AGDEDKAEEHNPETESHSRRKRSALTP. At Lys-222 the chain carries Lysine amide.

Belongs to the molluscan ELH family. As to expression, bag cell neurons.

It is found in the secreted. Functionally, ELH acts as a neurotransmitter locally, upon neurons of the abdominal ganglion and as a hormone by diffusing into the circulating hemolymph and modulating the activity of other organs. It specifically causes contraction of smooth muscle in the ovotestis and expulsion of the egg string. Alpha-BCP decreases the activity of a cluster of neurons in the left upper quadrant of the abdominal ganglion. Its function is as follows. Beta-BCP specifically excites 2 neurons, L1 and R1, in the abdominal ganglion. The sequence is that of ELH type 2 (ELH2) from Aplysia parvula (Dwarf sea hare).